We begin with the raw amino-acid sequence, 412 residues long: Decapping nuclease RAI1 (412 aa).

Position 196 (glutamate 196) interacts with a divalent metal cation. Substrate-binding residues include cysteine 228 and glutamate 245. The a divalent metal cation site is built by aspartate 247, glutamate 265, and leucine 266. 2 residues coordinate substrate: lysine 267 and glutamine 291.

It belongs to the DXO/Dom3Z family. Interacts with exr-1/rat1; the interaction is direct, stabilizes exr-1 protein structure and stimulates its exoribonuclease activity. The interaction also stimulates rai1 pyrophosphohydrolase activity, probably by recruiting it to mRNA substrates. A divalent metal cation is required as a cofactor.

It is found in the nucleus. The catalysed reaction is a 5'-end NAD(+)-phospho-ribonucleoside in mRNA + H2O = a 5'-end phospho-ribonucleoside in mRNA + NAD(+) + H(+). It carries out the reaction a 5'-end (N(7)-methyl 5'-triphosphoguanosine)-ribonucleoside-ribonucleotide in mRNA + H2O = a (N(7)-methyl 5'-triphosphoguanosine)-nucleoside + a 5'-end phospho-ribonucleoside in mRNA + H(+). The enzyme catalyses a 5'-end triphospho-ribonucleoside in mRNA + H2O = a 5'-end phospho-ribonucleoside in mRNA + diphosphate + H(+). Its function is as follows. Decapping enzyme for NAD-capped RNAs: specifically hydrolyzes the nicotinamide adenine dinucleotide (NAD) cap from a subset of RNAs by removing the entire NAD moiety from the 5'-end of an NAD-capped RNA. The NAD-cap is present at the 5'-end of some RNAs and snoRNAs. In contrast to the canonical 5'-end N7 methylguanosine (m7G) cap, the NAD cap promotes mRNA decay. Also acts as a non-canonical decapping enzyme that removes the entire cap structure of m7G capped or incompletely capped RNAs. Has decapping activity toward incomplete 5'-end m7G cap mRNAs such as unmethylated 5'-end-capped RNA (cap0), while it has no activity toward 2'-O-ribose methylated m7G cap (cap1). Also possesses RNA 5'-pyrophosphohydrolase activity by hydrolyzing the 5'-end triphosphate to release pyrophosphates. Stimulates exoribonuclease activity of Rat1, allowing it to degrade RNAs with stable secondary structure more effectively. In Neurospora crassa (strain ATCC 24698 / 74-OR23-1A / CBS 708.71 / DSM 1257 / FGSC 987), this protein is Decapping nuclease RAI1 (rai1).